The chain runs to 384 residues: Geranylgeranyl pyrophosphate synthase (384 aa).

Disordered regions lie at residues 1 to 25 and 39 to 78; these read MVPN…TSST and RPVP…PARY. The span at 47–62 shows a compositional bias: polar residues; sequence LGQNNTRNRSSSTTAI. Isopentenyl diphosphate is bound by residues Lys112, Arg115, and His144. Mg(2+)-binding residues include Asp151 and Asp155. Arg160 is a dimethylallyl diphosphate binding site. Arg161 lines the isopentenyl diphosphate pocket. Dimethylallyl diphosphate is bound by residues Lys238, Thr239, and Gln272. A Mg(2+)-binding site is contributed by Asp275. Residues Asn279, Lys289, and Lys299 each contribute to the dimethylallyl diphosphate site.

It belongs to the FPP/GGPP synthase family. Requires Mg(2+) as cofactor.

The enzyme catalyses isopentenyl diphosphate + dimethylallyl diphosphate = (2E)-geranyl diphosphate + diphosphate. It catalyses the reaction isopentenyl diphosphate + (2E)-geranyl diphosphate = (2E,6E)-farnesyl diphosphate + diphosphate. The catalysed reaction is isopentenyl diphosphate + (2E,6E)-farnesyl diphosphate = (2E,6E,10E)-geranylgeranyl diphosphate + diphosphate. The protein operates within secondary metabolite biosynthesis. Its function is as follows. Catalyzes the trans-addition of the 3 molecules of isopentenyl diphosphate (IPP) onto dimethylallyl diphosphate (DMAPP) to form geranylgeranyl pyrophosphate (GGPP). GGPP is a precursor for the biosynthesis of many secondary metabolites, including the indole diterpenes nodulisporic acids (NA). This chain is Geranylgeranyl pyrophosphate synthase, found in Hypoxylon pulicicidum.